The primary structure comprises 311 residues: Heme A synthase (311 aa).

Residues methionine 1 to lysine 6 lie on the Cytoplasmic side of the membrane. A helical membrane pass occupies residues tryptophan 7 to threonine 27. The Extracellular portion of the chain corresponds to lysine 28 to arginine 62. A disulfide bond links cysteine 35 and cysteine 42. Glutamate 58 is a catalytic residue. Position 61 (histidine 61) interacts with heme o. A helical membrane pass occupies residues leucine 63 to tyrosine 83. Residues lysine 84–threonine 91 are Cytoplasmic-facing. The helical transmembrane segment at leucine 92 to valine 112 threads the bilayer. The Extracellular segment spans residues tryptophan 113 to alanine 121. Residues isoleucine 122–phenylalanine 142 traverse the membrane as a helical segment. Histidine 123 serves as a coordination point for heme o. The Cytoplasmic segment spans residues glutamate 143–methionine 159. A helical transmembrane segment spans residues lysine 160–valine 180. At arginine 181–methionine 211 the chain is on the extracellular side. Cysteine 189 and cysteine 195 are disulfide-bonded. The chain crosses the membrane as a helical span at residues glycine 212 to isoleucine 232. Residue histidine 213 participates in heme b binding. At arginine 233–tryptophan 243 the chain is on the cytoplasmic side. Residues glycine 244–phenylalanine 264 form a helical membrane-spanning segment. The Extracellular segment spans residues threonine 265 to methionine 271. The chain crosses the membrane as a helical span at residues alanine 272–leucine 292. Position 275 (histidine 275) interacts with heme b. At glycine 293–lysine 311 the chain is on the cytoplasmic side.

This sequence belongs to the COX15/CtaA family. Type 1 subfamily. In terms of assembly, interacts with CtaB. Requires heme b as cofactor.

The protein resides in the cell membrane. It catalyses the reaction Fe(II)-heme o + 2 A + H2O = Fe(II)-heme a + 2 AH2. It functions in the pathway porphyrin-containing compound metabolism; heme A biosynthesis; heme A from heme O: step 1/1. In terms of biological role, catalyzes the conversion of heme O to heme A by two successive hydroxylations of the methyl group at C8. The first hydroxylation forms heme I, the second hydroxylation results in an unstable dihydroxymethyl group, which spontaneously dehydrates, resulting in the formyl group of heme A. The sequence is that of Heme A synthase from Bacillus cereus (strain G9842).